The following is a 158-amino-acid chain: Transcription elongation factor GreA (158 aa).

Residues 48–74 are a coiled coil; sequence EYDAAKNRQGFIEGRIKELNDKIARAE.

It belongs to the GreA/GreB family.

In terms of biological role, necessary for efficient RNA polymerase transcription elongation past template-encoded arresting sites. The arresting sites in DNA have the property of trapping a certain fraction of elongating RNA polymerases that pass through, resulting in locked ternary complexes. Cleavage of the nascent transcript by cleavage factors such as GreA or GreB allows the resumption of elongation from the new 3'terminus. GreA releases sequences of 2 to 3 nucleotides. The sequence is that of Transcription elongation factor GreA from Syntrophotalea carbinolica (strain DSM 2380 / NBRC 103641 / GraBd1) (Pelobacter carbinolicus).